The primary structure comprises 964 residues: Translation initiation factor IF-2 (964 aa).

A disordered region spans residues 26-375 (AAGVSKRSPE…QNNQHAFQAP (350 aa)). Composition is skewed to basic and acidic residues over residues 49–60 (YLKRSHGAREDS), 91–103 (VRPD…EAPK), 118–154 (AKPE…KPEP), 174–206 (IAAR…ERRQ), 225–236 (PQREERRDDRRG), 243–252 (RGPRGNDNRG), and 328–339 (KGGERSWDDNKK). The tr-type G domain maps to 464–633 (PRSPVVTVMG…LLQAEVLELK (170 aa)). The tract at residues 473–480 (GHVDHGKT) is G1. A GTP-binding site is contributed by 473-480 (GHVDHGKT). The segment at 498 to 502 (GITQH) is G2. The G3 stretch occupies residues 519 to 522 (DTPG). GTP is bound by residues 519 to 523 (DTPGH) and 573 to 576 (NKID). The G4 stretch occupies residues 573-576 (NKID). The interval 609–611 (SAK) is G5.

The protein belongs to the TRAFAC class translation factor GTPase superfamily. Classic translation factor GTPase family. IF-2 subfamily.

It localises to the cytoplasm. Functionally, one of the essential components for the initiation of protein synthesis. Protects formylmethionyl-tRNA from spontaneous hydrolysis and promotes its binding to the 30S ribosomal subunits. Also involved in the hydrolysis of GTP during the formation of the 70S ribosomal complex. This Chromobacterium violaceum (strain ATCC 12472 / DSM 30191 / JCM 1249 / CCUG 213 / NBRC 12614 / NCIMB 9131 / NCTC 9757 / MK) protein is Translation initiation factor IF-2.